We begin with the raw amino-acid sequence, 310 residues long: uncharacterized protein (310 aa).

At 1–6 the chain is on the cytoplasmic side; the sequence is MISEKA. The PQ-loop 1 domain occupies 5–69; the sequence is KAATALATIA…SKGNVILQVQ (65 aa). The helical transmembrane segment at 7 to 27 threads the bilayer; it reads ATALATIATVCWCVQLIPQII. Residues 28–36 lie on the Extracellular side of the membrane; sequence YNWKKKDCT. The chain crosses the membrane as a helical span at residues 37 to 57; it reads GLPPLMMFLWVVSGIPFAIYF. At 58–61 the chain is on the cytoplasmic side; the sequence is CVSK. A helical membrane pass occupies residues 62–82; it reads GNVILQVQPHLFMFFCSISFV. Topologically, residues 83–96 are extracellular; the sequence is QSCYYPPISMARSK. Residues 97 to 117 form a helical membrane-spanning segment; the sequence is IVMIVAAIIAADVGMEVGFIL. At 118–131 the chain is on the cytoplasmic side; the sequence is WLRPLYEKGVKWPD. Residues 132–152 traverse the membrane as a helical segment; sequence LIFGISASVLLAVGLLPPYFE. Positions 138–194 constitute a PQ-loop 2 domain; sequence ASVLLAVGLLPPYFELAKRKGRVIGINFAFLFIDSLGAWLSIISVILGNMDIMGIIL. The Extracellular portion of the chain corresponds to 153-164; the sequence is LAKRKGRVIGIN. A helical transmembrane segment spans residues 165–185; sequence FAFLFIDSLGAWLSIISVILG. Residues 186 to 191 are Cytoplasmic-facing; it reads NMDIMG. The helical transmembrane segment at 192–212 threads the bilayer; sequence IILYSIVAGMELGIFASHFIW. At 213 to 310 the chain is on the extracellular side; sequence WCRFRFLAKG…DPDRYSRLSV (98 aa). Ser-229 is modified (phosphoserine). Asn-251 and Asn-259 each carry an N-linked (GlcNAc...) asparagine glycan.

The protein resides in the cell membrane. This is an uncharacterized protein from Saccharomyces cerevisiae (strain ATCC 204508 / S288c) (Baker's yeast).